The chain runs to 1029 residues: Protein phosphatase 1 regulatory subunit 12A (1029 aa).

The KVKF motif signature appears at 35–38 (KVKF). 6 ANK repeats span residues 39-68 (DDGA…DINY), 72-101 (DGLT…NINQ), 105-134 (EGWI…HVGA), 138-164 (EGDT…RQGV), 198-227 (SGGT…DVNI), and 231-260 (DGWT…DMET). Residues Asn-67 and Asn-100 each carry the (3S)-3-hydroxyasparagine; by HIF1AN modification. Asn-226 carries the (3S)-3-hydroxyasparagine; by HIF1AN modification. Positions 290 to 786 (LHSEKRDKKS…APSSSSLSTL (497 aa)) are disordered. Over residues 291–300 (HSEKRDKKSP) the composition is skewed to basic and acidic residues. Ser-299 is modified (phosphoserine). The segment covering 302 to 314 (IESTANMENNQPQ) has biased composition (polar residues). Positions 318–353 (KNKETLIIEPEKNASRIESLEHEKADEEEEGKKDES) are enriched in basic and acidic residues. Over residues 357-369 (SEEDEEDDSESEA) the composition is skewed to acidic residues. A compositionally biased stretch (low complexity) spans 385–402 (TSSTQAAPAAVTAPTLSS). Phosphoserine occurs at positions 422 and 432. The span at 422–432 (SPKEEERKDES) shows a compositional bias: basic and acidic residues. Residue Thr-443 is modified to Phosphothreonine. The residue at position 445 (Ser-445) is a Phosphoserine; by NUAK1. A Phosphotyrosine modification is found at Tyr-446. Positions 469–480 (RSASSPRLSSSL) are enriched in low complexity. Phosphoserine; by NUAK1 is present on Ser-472. The residue at position 473 (Ser-473) is a Phosphoserine; by CDK1. Residue Ser-477 is modified to Phosphoserine. Basic and acidic residues predominate over residues 481–491 (DNKEKEKDNKG). Residues Ser-507 and Ser-509 each carry the phosphoserine modification. Residues 540 to 551 (NSSINEGSTYHR) are compositionally biased toward polar residues. Residues 564–578 (SCSVPSTTSTPTVTS) are compositionally biased toward low complexity. Residues 585–594 (SLPSSTSTAA) are compositionally biased toward polar residues. Low complexity predominate over residues 596–610 (TPPGSSSAGTQSSTS). A phosphoserine mark is found at Ser-601 and Ser-618. Residues 614–625 (WAEDSTEKEKDS) are compositionally biased toward basic and acidic residues. Low complexity predominate over residues 626–656 (APTAVTIPVAPTVVNAAAPSTTTLTTTTAGT). Over residues 671-680 (VRDEESESQR) the composition is skewed to basic and acidic residues. Positions 680 to 863 (RKARSRQARQ…VSFWTQDSDE (184 aa)) are interaction with ROCK2. Positions 681–691 (KARSRQARQSR) are enriched in basic residues. A phosphoserine; by PKA and PKG; in vitro mark is found at Ser-690 and Ser-693. Thr-694 carries the phosphothreonine; by ROCK1, ROCK2, CDC42BP, ZIPK/DAPK3 and RAF1 modification. A compositionally biased stretch (basic and acidic residues) spans 716-765 (RTREQENEEKEKEEKEKQDKEKQEEKKESEASREDEYKQKYSRTYDETYT). Low complexity predominate over residues 771-786 (STSSSSAPSSSSLSTL). The residue at position 801 (Ser-801) is a Phosphoserine. The segment at 808 to 927 (AYSRGLAKEN…PYSSRLEKDD (120 aa)) is disordered. A compositionally biased stretch (basic and acidic residues) spans 813 to 839 (LAKENEREGEKKEEEKEGEDKSQPKSI). The segment covering 840–851 (RERRRPREKRRS) has biased composition (basic residues). Ser-851 is modified (phosphoserine; by ROCK2). Phosphoserine is present on residues Ser-861 and Ser-870. Over residues 866 to 882 (QERQSDTEDGSSKRETQ) the composition is skewed to basic and acidic residues. Over residues 883-897 (TDSVSRYDSSSTSSS) the composition is skewed to low complexity. Phosphoserine is present on residues Ser-902 and Ser-907. Phosphoserine; by NUAK1 is present on Ser-909. A compositionally biased stretch (basic and acidic residues) spans 913–927 (LEDRKPYSSRLEKDD). Ser-994 is modified (phosphoserine).

As to quaternary structure, PP1 comprises a catalytic subunit, PPP1CA, PPP1CB or PPP1CC, and one or several targeting or regulatory subunits. PPP1R12A mediates binding to myosin. Interacts with ARHA and CIT. Binds PPP1R12B, ROCK1 and IL16. Interacts directly with PRKG1. Non-covalent dimer of 2 dimers; PRKG1-PRKG1 and PPP1R12A-PPP1R12A. Interacts with SMTNL1. Interacts with PPP1CB; the interaction is direct. Interacts (when phosphorylated at Ser-445, Ser-472 and Ser-910) with 14-3-3. Interacts with ROCK1 and ROCK2. Interacts with isoform 1 and isoform 2 of ZIPK/DAPK3. Interacts with RAF1. Interacts with HIF1AN. Interacts with NCKAP1L. Post-translationally, phosphorylated by CIT (Rho-associated kinase). Phosphorylated cooperatively by ROCK1 and CDC42BP on Thr-694. Phosphorylated on upon DNA damage, probably by ATM or ATR. In vitro, phosphorylation of Ser-693 by PKA and PKG appears to prevent phosphorylation of the inhibitory site Thr-694, probably mediated by PRKG1. Phosphorylation at Ser-445, Ser-472 and Ser-909 by NUAK1 promotes interaction with 14-3-3, leading to inhibit interaction with myosin light chain MLC2, preventing dephosphorylation of MLC2. May be phosphorylated at Thr-694 by DMPK; may inhibit the myosin phosphatase activity. Phosphorylated at Ser-473 by CDK1 during mitosis, creating docking sites for the POLO box domains of PLK1. Subsequently, PLK1 binds and phosphorylates PPP1R12A. As to expression, expressed in striated and vascular smooth muscle, specificcally in type 2a fibers (at protein level). Expression levels are 20-30% higher in developed males than females (at protein level).

It is found in the cytoplasm. The protein resides in the cytoskeleton. The protein localises to the stress fiber. Functionally, key regulator of protein phosphatase 1C (PPP1C). Mediates binding to myosin. As part of the PPP1C complex, involved in dephosphorylation of PLK1. Capable of inhibiting HIF1AN-dependent suppression of HIF1A activity. The polypeptide is Protein phosphatase 1 regulatory subunit 12A (Mus musculus (Mouse)).